The following is a 162-amino-acid chain: Phosphopantetheine adenylyltransferase (162 aa).

A substrate-binding site is contributed by Ser-11. ATP contacts are provided by residues Ser-11 to Phe-12 and His-19. The substrate site is built by Lys-43, Val-76, and Arg-90. Residues Gly-91–Arg-93, Glu-101, and His-126–Ser-132 contribute to the ATP site.

Belongs to the bacterial CoaD family. In terms of assembly, homohexamer. The cofactor is Mg(2+).

Its subcellular location is the cytoplasm. The catalysed reaction is (R)-4'-phosphopantetheine + ATP + H(+) = 3'-dephospho-CoA + diphosphate. It functions in the pathway cofactor biosynthesis; coenzyme A biosynthesis; CoA from (R)-pantothenate: step 4/5. In terms of biological role, reversibly transfers an adenylyl group from ATP to 4'-phosphopantetheine, yielding dephospho-CoA (dPCoA) and pyrophosphate. This chain is Phosphopantetheine adenylyltransferase, found in Streptococcus pneumoniae (strain ATCC 700669 / Spain 23F-1).